The following is a 192-amino-acid chain: Thiol-disulfide oxidoreductase ResA (192 aa).

A helical; Signal-anchor for type II membrane protein membrane pass occupies residues 22 to 41; it reads SSILLILVAAVVFAIVSNMK. In terms of domain architecture, Thioredoxin spans 47–189; the sequence is YRVGDAAPDF…LEGYLNDIAP (143 aa). Cysteines 89 and 92 form a disulfide.

The protein belongs to the thioredoxin family. ResA subfamily.

The protein localises to the cell membrane. Its pathway is protein modification; cytochrome c assembly. In terms of biological role, thiol-disulfide oxidoreductase which is required in disulfide reduction during c-type cytochrome synthesis. May accept reducing equivalents from CcdA, leading to breakage of disulfide bonds in apocytochrome c; following this reduction heme can be covalently attached. This is Thiol-disulfide oxidoreductase ResA from Oceanobacillus iheyensis (strain DSM 14371 / CIP 107618 / JCM 11309 / KCTC 3954 / HTE831).